The sequence spans 353 residues: Holliday junction branch migration complex subunit RuvB (353 aa).

The interval 4–185 (ADRLITAVGG…FGIVQRLEFY (182 aa)) is large ATPase domain (RuvB-L). ATP contacts are provided by residues isoleucine 24, arginine 25, glycine 66, lysine 69, threonine 70, threonine 71, 132–134 (EDF), arginine 175, tyrosine 185, and arginine 222. Threonine 70 is a binding site for Mg(2+). The segment at 186–256 (NIADLSTIVA…TADKALNLLD (71 aa)) is small ATPAse domain (RuvB-S). The interval 259–353 (EHGFDHQDRR…GEFVDDAADL (95 aa)) is head domain (RuvB-H). DNA contacts are provided by arginine 295, arginine 314, and arginine 319.

It belongs to the RuvB family. As to quaternary structure, homohexamer. Forms an RuvA(8)-RuvB(12)-Holliday junction (HJ) complex. HJ DNA is sandwiched between 2 RuvA tetramers; dsDNA enters through RuvA and exits via RuvB. An RuvB hexamer assembles on each DNA strand where it exits the tetramer. Each RuvB hexamer is contacted by two RuvA subunits (via domain III) on 2 adjacent RuvB subunits; this complex drives branch migration. In the full resolvosome a probable DNA-RuvA(4)-RuvB(12)-RuvC(2) complex forms which resolves the HJ.

The protein localises to the cytoplasm. It catalyses the reaction ATP + H2O = ADP + phosphate + H(+). In terms of biological role, the RuvA-RuvB-RuvC complex processes Holliday junction (HJ) DNA during genetic recombination and DNA repair, while the RuvA-RuvB complex plays an important role in the rescue of blocked DNA replication forks via replication fork reversal (RFR). RuvA specifically binds to HJ cruciform DNA, conferring on it an open structure. The RuvB hexamer acts as an ATP-dependent pump, pulling dsDNA into and through the RuvAB complex. RuvB forms 2 homohexamers on either side of HJ DNA bound by 1 or 2 RuvA tetramers; 4 subunits per hexamer contact DNA at a time. Coordinated motions by a converter formed by DNA-disengaged RuvB subunits stimulates ATP hydrolysis and nucleotide exchange. Immobilization of the converter enables RuvB to convert the ATP-contained energy into a lever motion, pulling 2 nucleotides of DNA out of the RuvA tetramer per ATP hydrolyzed, thus driving DNA branch migration. The RuvB motors rotate together with the DNA substrate, which together with the progressing nucleotide cycle form the mechanistic basis for DNA recombination by continuous HJ branch migration. Branch migration allows RuvC to scan DNA until it finds its consensus sequence, where it cleaves and resolves cruciform DNA. The chain is Holliday junction branch migration complex subunit RuvB from Pseudomonas syringae pv. tomato (strain ATCC BAA-871 / DC3000).